A 306-amino-acid polypeptide reads, in one-letter code: Aspartate carbamoyltransferase catalytic subunit (306 aa).

Arg51 and Thr52 together coordinate carbamoyl phosphate. An L-aspartate-binding site is contributed by Lys80. Carbamoyl phosphate is bound by residues Arg101, His129, and Gln132. Arg162 and Arg224 together coordinate L-aspartate. Positions 263 and 264 each coordinate carbamoyl phosphate.

The protein belongs to the aspartate/ornithine carbamoyltransferase superfamily. ATCase family. In terms of assembly, heterododecamer (2C3:3R2) of six catalytic PyrB chains organized as two trimers (C3), and six regulatory PyrI chains organized as three dimers (R2).

The enzyme catalyses carbamoyl phosphate + L-aspartate = N-carbamoyl-L-aspartate + phosphate + H(+). Its pathway is pyrimidine metabolism; UMP biosynthesis via de novo pathway; (S)-dihydroorotate from bicarbonate: step 2/3. Functionally, catalyzes the condensation of carbamoyl phosphate and aspartate to form carbamoyl aspartate and inorganic phosphate, the committed step in the de novo pyrimidine nucleotide biosynthesis pathway. This Parabacteroides distasonis (strain ATCC 8503 / DSM 20701 / CIP 104284 / JCM 5825 / NCTC 11152) protein is Aspartate carbamoyltransferase catalytic subunit.